A 254-amino-acid chain; its full sequence is Hydroxyacylglutathione hydrolase (254 aa).

The Zn(2+) site is built by histidine 54, histidine 56, aspartate 58, histidine 59, histidine 111, aspartate 130, and histidine 168.

The protein belongs to the metallo-beta-lactamase superfamily. Glyoxalase II family. Monomer. It depends on Zn(2+) as a cofactor.

The enzyme catalyses an S-(2-hydroxyacyl)glutathione + H2O = a 2-hydroxy carboxylate + glutathione + H(+). It functions in the pathway secondary metabolite metabolism; methylglyoxal degradation; (R)-lactate from methylglyoxal: step 2/2. Thiolesterase that catalyzes the hydrolysis of S-D-lactoyl-glutathione to form glutathione and D-lactic acid. The sequence is that of Hydroxyacylglutathione hydrolase from Legionella pneumophila (strain Paris).